Reading from the N-terminus, the 376-residue chain is Fibromodulin (376 aa).

A signal peptide spans 1 to 18 (MQWASILLLRGLCSLSQG). Q19 bears the Pyrrolidone carboxylic acid mark. Y20, Y38, Y53, Y55, Y63, and Y65 each carry sulfotyrosine. One can recognise an LRRNT domain in the interval 67-105 (APPPPEPRDCPQECDCPPNFPTAMYCDNRNLKYLPFVPS). LRR repeat units follow at residues 106 to 127 (RMKY…VFDN), 130 to 143 (GLLW…QITS), 156 to 176 (HLER…PLPR), 177 to 198 (SLRE…ALEG), 201 to 222 (NLTA…MRGL), 224 to 245 (SLIL…LPSA), 246 to 266 (LEQL…YFRG), and 269 to 289 (KLLY…ATNT). N127 carries an N-linked (GlcNAc...) (keratan sulfate) asparagine glycan. The N-linked (GlcNAc...) (keratan sulfate) asparagine glycan is linked to N166. A glycan (N-linked (GlcNAc...) (keratan sulfate) asparagine) is linked at N201. A glycan (N-linked (GlcNAc...) (keratan sulfate) asparagine) is linked at N291. LRR repeat units follow at residues 294-315 (SLLE…NTNL) and 316-335 (ENLY…SFCT). Residues C334 and C367 are joined by a disulfide bond. An N-linked (GlcNAc...) asparagine glycan is attached at N341. An LRR 11 repeat occupies 344–367 (KLQVLRLDGNEIKRSAMPVDAPLC).

Belongs to the small leucine-rich proteoglycan (SLRP) family. SLRP class II subfamily. Binds to type I and type II collagen. In terms of processing, binds keratan sulfate chains.

Its subcellular location is the secreted. It is found in the extracellular space. The protein resides in the extracellular matrix. Functionally, affects the rate of fibrils formation. May have a primary role in collagen fibrillogenesis. This chain is Fibromodulin (Fmod), found in Rattus norvegicus (Rat).